The primary structure comprises 138 residues: Small ribosomal subunit protein uS11c (138 aa).

The interval 1-22 is disordered; sequence MAKPILRVGSRKNTRSASRKNV. A compositionally biased stretch (basic residues) spans 9–22; the sequence is GSRKNTRSASRKNV.

Belongs to the universal ribosomal protein uS11 family. In terms of assembly, part of the 30S ribosomal subunit.

Its subcellular location is the plastid. It localises to the chloroplast. The protein is Small ribosomal subunit protein uS11c of Draba nemorosa (Woodland whitlowgrass).